Here is a 121-residue protein sequence, read N- to C-terminus: Aspartate 1-decarboxylase (121 aa).

S25 functions as the Schiff-base intermediate with substrate; via pyruvic acid in the catalytic mechanism. At S25 the chain carries Pyruvic acid (Ser). T57 is a substrate binding site. Y58 (proton donor) is an active-site residue. 73-75 is a binding site for substrate; the sequence is GAA.

It belongs to the PanD family. In terms of assembly, heterooctamer of four alpha and four beta subunits. The cofactor is pyruvate. In terms of processing, is synthesized initially as an inactive proenzyme, which is activated by self-cleavage at a specific serine bond to produce a beta-subunit with a hydroxyl group at its C-terminus and an alpha-subunit with a pyruvoyl group at its N-terminus.

The protein resides in the cytoplasm. The enzyme catalyses L-aspartate + H(+) = beta-alanine + CO2. It functions in the pathway cofactor biosynthesis; (R)-pantothenate biosynthesis; beta-alanine from L-aspartate: step 1/1. Functionally, catalyzes the pyruvoyl-dependent decarboxylation of aspartate to produce beta-alanine. This Wolinella succinogenes (strain ATCC 29543 / DSM 1740 / CCUG 13145 / JCM 31913 / LMG 7466 / NCTC 11488 / FDC 602W) (Vibrio succinogenes) protein is Aspartate 1-decarboxylase.